A 457-amino-acid chain; its full sequence is Methylenetetrahydrofolate--tRNA-(uracil-5-)-methyltransferase TrmFO (457 aa).

Glycine 8–glycine 13 is an FAD binding site.

This sequence belongs to the MnmG family. TrmFO subfamily. FAD is required as a cofactor.

It localises to the cytoplasm. It catalyses the reaction uridine(54) in tRNA + (6R)-5,10-methylene-5,6,7,8-tetrahydrofolate + NADH + H(+) = 5-methyluridine(54) in tRNA + (6S)-5,6,7,8-tetrahydrofolate + NAD(+). The enzyme catalyses uridine(54) in tRNA + (6R)-5,10-methylene-5,6,7,8-tetrahydrofolate + NADPH + H(+) = 5-methyluridine(54) in tRNA + (6S)-5,6,7,8-tetrahydrofolate + NADP(+). Its function is as follows. Catalyzes the folate-dependent formation of 5-methyl-uridine at position 54 (M-5-U54) in all tRNAs. In Thermosynechococcus vestitus (strain NIES-2133 / IAM M-273 / BP-1), this protein is Methylenetetrahydrofolate--tRNA-(uracil-5-)-methyltransferase TrmFO.